A 641-amino-acid polypeptide reads, in one-letter code: Transcription termination factor MTERF2, chloroplastic (641 aa).

Disordered regions lie at residues Leu-54–Gly-80 and Phe-606–Glu-641. Acidic residues predominate over residues Leu-610–Glu-641.

The protein belongs to the mTERF family.

The protein resides in the plastid. The protein localises to the chloroplast. Functionally, transcription termination factor involved in processing of plastid transcripts. Essential for embryogenesis. This chain is Transcription termination factor MTERF2, chloroplastic, found in Arabidopsis thaliana (Mouse-ear cress).